A 212-amino-acid polypeptide reads, in one-letter code: Phosphatidylserine decarboxylase proenzyme (212 aa).

Ser182 acts as the Schiff-base intermediate with substrate; via pyruvic acid in catalysis. Ser182 is subject to Pyruvic acid (Ser); by autocatalysis.

The protein belongs to the phosphatidylserine decarboxylase family. PSD-A subfamily. Heterodimer of a large membrane-associated beta subunit and a small pyruvoyl-containing alpha subunit. Requires pyruvate as cofactor. Is synthesized initially as an inactive proenzyme. Formation of the active enzyme involves a self-maturation process in which the active site pyruvoyl group is generated from an internal serine residue via an autocatalytic post-translational modification. Two non-identical subunits are generated from the proenzyme in this reaction, and the pyruvate is formed at the N-terminus of the alpha chain, which is derived from the carboxyl end of the proenzyme. The post-translation cleavage follows an unusual pathway, termed non-hydrolytic serinolysis, in which the side chain hydroxyl group of the serine supplies its oxygen atom to form the C-terminus of the beta chain, while the remainder of the serine residue undergoes an oxidative deamination to produce ammonia and the pyruvoyl prosthetic group on the alpha chain.

The protein resides in the cell membrane. The enzyme catalyses a 1,2-diacyl-sn-glycero-3-phospho-L-serine + H(+) = a 1,2-diacyl-sn-glycero-3-phosphoethanolamine + CO2. Its pathway is phospholipid metabolism; phosphatidylethanolamine biosynthesis; phosphatidylethanolamine from CDP-diacylglycerol: step 2/2. Its function is as follows. Catalyzes the formation of phosphatidylethanolamine (PtdEtn) from phosphatidylserine (PtdSer). This chain is Phosphatidylserine decarboxylase proenzyme, found in Paraburkholderia xenovorans (strain LB400).